A 454-amino-acid polypeptide reads, in one-letter code: MAQWDSFTDQQEDTDSCSESVKFDARSNTALLPPNPKNGPPLQEKLKSFKAALIALYLLVFAVLIPIIAIMAAQLLKWEMKNCTVGSINANSVSSSLLGRGNDSEHEVRFREVVMEHISKMEKRIQYISDTEENLVDSEHFQNFSVTTDQRFADVLLQLSTLVPTVQGHGNAVDEITRSLISLNTTLLDLHLYVETLNVKFQENTLKGQEEISKLKERVHNASAEIMSMKEEQVHLEQEIKREVKVLNNITNDLRLKDWEHSQTLRNITLIQGPPGPPGEKGDRGPTGESGPPGVPGPVGPPGLKGDRGSIGFPGSRGYPGQSGKTGRTGYPGPKGQKGEKGSGSILTPSATVRLVGGRGPHEGRVEILHNGQWGTVCDDHWELRAGQVVCRSLGYRGVKSVHKKAYFGQGTGPIWLNEVPCLGMESSIEECKIRQWGVRVCSHGEDAGVTCTL.

Residues 1–22 form a disordered region; sequence MAQWDSFTDQQEDTDSCSESVK. Over 1 to 50 the chain is Cytoplasmic; it reads MAQWDSFTDQQEDTDSCSESVKFDARSNTALLPPNPKNGPPLQEKLKSFK. Position 27 is a phosphoserine (serine 27). A helical; Signal-anchor for type II membrane protein transmembrane segment spans residues 51 to 73; it reads AALIALYLLVFAVLIPIIAIMAA. Residues 74-109 are spacer; that stretch reads QLLKWEMKNCTVGSINANSVSSSLLGRGNDSEHEVR. Residues 74–454 are Extracellular-facing; that stretch reads QLLKWEMKNC…GEDAGVTCTL (381 aa). Residues asparagine 82, asparagine 102, asparagine 143, asparagine 184, asparagine 221, asparagine 249, and asparagine 267 are each glycosylated (N-linked (GlcNAc...) asparagine). Residues 199–256 adopt a coiled-coil conformation; that stretch reads VKFQENTLKGQEEISKLKERVHNASAEIMSMKEEQVHLEQEIKREVKVLNNITNDLRL. The segment at 267 to 347 is disordered; the sequence is NITLIQGPPG…KGEKGSGSIL (81 aa). One can recognise a Collagen-like domain in the interval 273–344; that stretch reads GPPGPPGEKG…KGQKGEKGSG (72 aa). Positions 353–453 constitute an SRCR domain; it reads VRLVGGRGPH…HGEDAGVTCT (101 aa). Cystine bridges form between cysteine 378–cysteine 442, cysteine 391–cysteine 452, and cysteine 422–cysteine 432.

In terms of assembly, homotrimer. Interacts with MYO18A.

The protein localises to the membrane. In terms of biological role, membrane glycoproteins implicated in the pathologic deposition of cholesterol in arterial walls during atherogenesis. Two types of receptor subunits exist. These receptors mediate the endocytosis of a diverse group of macromolecules, including modified low density lipoproteins (LDL). This Oryctolagus cuniculus (Rabbit) protein is Macrophage scavenger receptor types I and II (MSR1).